The following is a 430-amino-acid chain: tRNA(Ile)-lysidine synthase (430 aa).

Position 21 to 26 (21 to 26 (SGGLDS)) interacts with ATP.

It belongs to the tRNA(Ile)-lysidine synthase family.

Its subcellular location is the cytoplasm. The enzyme catalyses cytidine(34) in tRNA(Ile2) + L-lysine + ATP = lysidine(34) in tRNA(Ile2) + AMP + diphosphate + H(+). Its function is as follows. Ligates lysine onto the cytidine present at position 34 of the AUA codon-specific tRNA(Ile) that contains the anticodon CAU, in an ATP-dependent manner. Cytidine is converted to lysidine, thus changing the amino acid specificity of the tRNA from methionine to isoleucine. This chain is tRNA(Ile)-lysidine synthase, found in Salmonella typhi.